We begin with the raw amino-acid sequence, 253 residues long: Ubiquinone biosynthesis O-methyltransferase (253 aa).

S-adenosyl-L-methionine is bound by residues arginine 45, glycine 76, aspartate 97, and methionine 140.

This sequence belongs to the methyltransferase superfamily. UbiG/COQ3 family.

It carries out the reaction a 3-demethylubiquinol + S-adenosyl-L-methionine = a ubiquinol + S-adenosyl-L-homocysteine + H(+). The enzyme catalyses a 3-(all-trans-polyprenyl)benzene-1,2-diol + S-adenosyl-L-methionine = a 2-methoxy-6-(all-trans-polyprenyl)phenol + S-adenosyl-L-homocysteine + H(+). It participates in cofactor biosynthesis; ubiquinone biosynthesis. O-methyltransferase that catalyzes the 2 O-methylation steps in the ubiquinone biosynthetic pathway. The polypeptide is Ubiquinone biosynthesis O-methyltransferase (Parvibaculum lavamentivorans (strain DS-1 / DSM 13023 / NCIMB 13966)).